Consider the following 160-residue polypeptide: Nucleotide-binding protein PSHAa2277 (160 aa).

It belongs to the YajQ family.

Its function is as follows. Nucleotide-binding protein. The protein is Nucleotide-binding protein PSHAa2277 of Pseudoalteromonas translucida (strain TAC 125).